We begin with the raw amino-acid sequence, 334 residues long: tRNA methyltransferase 10 homolog A (334 aa).

Disordered regions lie at residues 1 to 101 (MSLE…SRKR) and 290 to 334 (PLTE…EQNS). A compositionally biased stretch (polar residues) spans 26–40 (HAGNNTPLQENSSAP). Positions 62 to 94 (KQWEDQRELRKQKRKEKRQKRKLERQAQAEHNI) form a coiled coil. Basic residues predominate over residues 71 to 84 (RKQKRKEKRQKRKL). Positions 85–98 (ERQAQAEHNIDANS) are enriched in basic and acidic residues. One can recognise an SAM-dependent MTase TRM10-type domain in the interval 98 to 289 (SRKRFRHEVQ…SVLPQRKGAI (192 aa)). Residues 305–317 (QEDGEDSDSDSSI) are compositionally biased toward acidic residues.

Belongs to the class IV-like SAM-binding methyltransferase superfamily. TRM10 family.

The enzyme catalyses guanosine(9) in tRNA + S-adenosyl-L-methionine = N(1)-methylguanosine(9) in tRNA + S-adenosyl-L-homocysteine + H(+). In terms of biological role, S-adenosyl-L-methionine-dependent guanine N(1)-methyltransferase that catalyzes the formation of N(1)-methylguanine at position 9 (m1G9) in tRNAs. Probably not able to catalyze formation of N(1)-methyladenine at position 9 (m1A9) in tRNAs. The chain is tRNA methyltransferase 10 homolog A (trmt10a) from Xenopus tropicalis (Western clawed frog).